Reading from the N-terminus, the 385-residue chain is Glucans biosynthesis protein C (385 aa).

10 helical membrane-spanning segments follow: residues 17–37, 60–80, 91–111, 137–157, 173–193, 212–232, 239–259, 274–294, 311–331, and 338–358; these read AWLM…SHTW, MQVF…RYPL, VGIP…IMLQ, ISHL…VWIF, KFSM…YAVI, FIVM…LAFI, LFTT…VAYL, TESV…FSFG, ASLF…AYIT, and WLGF…LYEI.

The protein belongs to the acyltransferase 3 family. OpgC subfamily.

The protein localises to the cell membrane. The protein operates within glycan metabolism; osmoregulated periplasmic glucan (OPG) biosynthesis. Functionally, necessary for the succinyl substitution of periplasmic glucans. Could catalyze the transfer of succinyl residues from the cytoplasmic side of the membrane to the nascent glucan backbones on the periplasmic side of the membrane. The chain is Glucans biosynthesis protein C from Escherichia coli O45:K1 (strain S88 / ExPEC).